Here is a 352-residue protein sequence, read N- to C-terminus: Protein MGF 360-9L (352 aa).

It belongs to the asfivirus MGF 360 family. As to quaternary structure, interacts with host STAT1; this interaction mediates STAT1 degradation through apoptosis. Interacts with host STAT2; this interaction mediates STAT2 degradation through the proteasome.

Its subcellular location is the host cytoplasm. Functionally, plays a role in virus cell tropism, and may be required for efficient virus replication in macrophages. This Ornithodoros (relapsing fever ticks) protein is Protein MGF 360-9L.